A 147-amino-acid polypeptide reads, in one-letter code: Hemoglobin subunit beta (147 aa).

V2 bears the N-acetylvaline mark. The Globin domain maps to 3–147 (HLTGEEKAAV…VANALAHKYH (145 aa)). T13 is subject to Phosphothreonine. Position 45 is a phosphoserine (S45). K60 bears the N6-acetyllysine mark. H64 provides a ligand contact to heme b. Position 83 is an N6-acetyllysine (K83). H93 contributes to the heme b binding site. C94 carries the post-translational modification S-nitrosocysteine. Position 145 is an N6-acetyllysine (K145).

This sequence belongs to the globin family. As to quaternary structure, heterotetramer of two alpha chains and two beta chains. As to expression, red blood cells.

Its function is as follows. Involved in oxygen transport from the lung to the various peripheral tissues. The protein is Hemoglobin subunit beta (HBB) of Ailuropoda melanoleuca (Giant panda).